The sequence spans 152 residues: Large ribosomal subunit protein bL9 (152 aa).

It belongs to the bacterial ribosomal protein bL9 family.

In terms of biological role, binds to the 23S rRNA. In Coxiella burnetii (strain RSA 331 / Henzerling II), this protein is Large ribosomal subunit protein bL9.